The primary structure comprises 1072 residues: E3 ubiquitin-protein ligase RNF31 (1072 aa).

The tract at residues 1-485 (MPGEEEERAF…PEKQRQDKMR (485 aa)) is polyubiquitin-binding. Residues 71–142 (TLSTALNILE…SFPEGQEEPD (72 aa)) form the PUB domain. A disordered region spans residues 263–290 (QGTHLSPSLPASAQPRPQSTSLLALGDS). Residues 265-280 (THLSPSLPASAQPRPQ) are compositionally biased toward polar residues. A compositionally biased stretch (low complexity) spans 281–290 (STSLLALGDS). 2 consecutive RanBP2-type zinc fingers follow at residues 299-329 (SAHL…PRGC) and 350-379 (ARGR…PRLA). At Ser-383 the chain carries Phosphoserine. Residues 409 to 438 (QSQVWYCIHCTFCNSSPGWVCVMCNRTSSP) form a RanBP2-type 3 zinc finger. The segment at 443 to 484 (HAPRPYASSLEKGPPKPGPPRRLSAPLPSSCGDPEKQRQDKM) is disordered. The span at 463–472 (RRLSAPLPSS) shows a compositional bias: low complexity. Position 466 is a phosphoserine (Ser-466). Residues 475–484 (DPEKQRQDKM) show a composition bias toward basic and acidic residues. The segment at 563–616 (GNLDEAVEECVRTRRRKVQELQSLGFGPEEGSLQALFQHGGDVSRALTELQRQR) is interaction with RBCK1. The 52-residue stretch at 564-615 (NLDEAVEECVRTRRRKVQELQSLGFGPEEGSLQALFQHGGDVSRALTELQRQ) folds into the UBA domain. The interval 695-929 (LAQECAVCGW…KSLHGHHPRD (235 aa)) is TRIAD supradomain. Cys-699, Cys-702, Cys-717, Cys-719, Cys-722, and Cys-725 together coordinate Zn(2+). The RING-type 1 zinc-finger motif lies at 699–749 (CAVCGWALPHNRMQALTSCECTICPDCFRQHFTIALKEKHITDMVCPACGR). A (Microbial infection) Glycyl lysine isopeptide (Lys-Gly) (interchain with G-Cter in ubiquitin) cross-link involves residue Lys-735. Residues Cys-744 and Cys-747 each coordinate Zn(2+). The IBR-type zinc finger occupies 779–841 (ALFHKKLTEG…WEEQHRGRSC (63 aa)). Lys-783 participates in a covalent cross-link: (Microbial infection) Glycyl lysine isopeptide (Lys-Gly) (interchain with G-Cter in ubiquitin). The Zn(2+) site is built by Cys-799, Cys-802, Cys-817, Cys-820, Cys-825, Cys-828, His-836, Cys-841, Cys-871, and Cys-874. The RING-type 2; atypical zinc finger occupies 871-901 (CPKCKFSYALARGGCMHFHCTQCRHQFCSGC). Residue Lys-875 forms a (Microbial infection) Glycyl lysine isopeptide (Lys-Gly) (interchain with G-Cter in ubiquitin) linkage. The active site involves Cys-885. Positions 890, 893, 898, 901, 916, and 925 each coordinate Zn(2+). The tract at residues 910 to 1072 (KCPEPNCRVK…LGQSIPRRRK (163 aa)) is LDD domain.

The protein belongs to the RBR family. As to quaternary structure, component of the LUBAC complex (linear ubiquitin chain assembly complex) which consists of SHARPIN, RBCK1 and RNF31. LUBAC has a MW of approximately 600 kDa suggesting a heteromultimeric assembly of its subunits. Associates with the TNF-R1 signaling complex (TNF-RSC) in a stimulation-dependent manner. Interacts (via the PUB domain) with OTULIN (via the PIM motif); the interaction is direct. Interacts (via the PUB domain) with VCP (via the PIM motif). Interacts (via the PUB domain) with SPATA2 (via the PIM motif); interaction is direct and bridges RNF31 and CYLD. Interacts with CYLD; the interaction is indirect and is mediated via SPATA2. Interacts with MUSK. Interacts with CARD11, promoting linear ubiquitination of BCL10. (Microbial infection) Interacts with S.flexneri E3 ubiquitin-protein ligases IpaH1.4 and IpaH2.5, leading to its ubiquitination. In terms of processing, autoubiquitinated. Interaction with OTULIN is required to suppress formation of 'Met-1'-linked polyubiquitin chains and prevent subsequent inactivation of the LUBAC complex. Post-translationally, cleaved by caspase during apoptosis. (Microbial infection) Ubiquitinated by S.flexneri E3 ubiquitin-protein ligases IpaH1.4 and IpaH2.5, leading to its degradation by the proteasome, thereby preventing formation of the bacterial ubiquitin coat and activation of innate immunity. Expressed in both normal and transformed breast epithelial cell lines.

The protein resides in the cytoplasm. The catalysed reaction is [E2 ubiquitin-conjugating enzyme]-S-ubiquitinyl-L-cysteine + [acceptor protein]-L-lysine = [E2 ubiquitin-conjugating enzyme]-L-cysteine + [acceptor protein]-N(6)-ubiquitinyl-L-lysine.. The protein operates within protein modification; protein ubiquitination. In terms of biological role, E3 ubiquitin-protein ligase component of the LUBAC complex which conjugates linear ('Met-1'-linked) polyubiquitin chains to substrates and plays a key role in NF-kappa-B activation and regulation of inflammation. LUBAC conjugates linear polyubiquitin to IKBKG and RIPK1 and is involved in activation of the canonical NF-kappa-B and the JNK signaling pathways. Linear ubiquitination mediated by the LUBAC complex interferes with TNF-induced cell death and thereby prevents inflammation. LUBAC is recruited to the TNF-R1 signaling complex (TNF-RSC) following polyubiquitination of TNF-RSC components by BIRC2 and/or BIRC3 and to conjugate linear polyubiquitin to IKBKG and possibly other components contributing to the stability of the complex. The LUBAC complex is also involved in innate immunity by conjugating linear polyubiquitin chains at the surface of bacteria invading the cytosol to form the ubiquitin coat surrounding bacteria. LUBAC is not able to initiate formation of the bacterial ubiquitin coat, and can only promote formation of linear polyubiquitins on pre-existing ubiquitin. Recruited to the surface of bacteria by RNF213, which initiates the bacterial ubiquitin coat. The bacterial ubiquitin coat acts as an 'eat-me' signal for xenophagy and promotes NF-kappa-B activation. Together with OTULIN, the LUBAC complex regulates the canonical Wnt signaling during angiogenesis. RNF31 is required for linear ubiquitination of BCL10, thereby promoting TCR-induced NF-kappa-B activation. Binds polyubiquitin of different linkage types. In Homo sapiens (Human), this protein is E3 ubiquitin-protein ligase RNF31.